A 282-amino-acid polypeptide reads, in one-letter code: Chlorite dismutase (282 aa).

The signal sequence occupies residues 1–31 (MTNLSIHNFKLSLVAAVIGSAMVMTSSPVAA). Residue Glu104 coordinates Ca(2+). Residue His204 participates in heme binding. Arg217 acts as the Proton acceptor in catalysis. The Ca(2+) site is built by Asp226 and Thr265.

Belongs to the chlorite dismutase family. In terms of assembly, homopentamer. The cofactor is heme b.

It is found in the periplasm. It catalyses the reaction chloride + O2 = chlorite. Functionally, catalyzes the heme-dependent decomposition of chlorite to O(2) and chloride with high efficiency and specificity. Used to detoxify chlorite, a by-product of the reduction of perchlorate, a primarily anthropogenic pollutant, in perchlorate-respiring bacteria. In Dechloromonas aromatica (strain RCB), this protein is Chlorite dismutase.